The sequence spans 719 residues: Polyribonucleotide nucleotidyltransferase (719 aa).

Residues aspartate 507 and aspartate 513 each coordinate Mg(2+). The KH domain maps to 573–633 (PKLELFSVDP…EQIKAAKDYI (61 aa)). Positions 658–719 (GQEFQGIVKK…NGKISVDLCE (62 aa)) constitute an S1 motif domain.

It belongs to the polyribonucleotide nucleotidyltransferase family. It depends on Mg(2+) as a cofactor.

It localises to the cytoplasm. It catalyses the reaction RNA(n+1) + phosphate = RNA(n) + a ribonucleoside 5'-diphosphate. Its function is as follows. Involved in mRNA degradation. Catalyzes the phosphorolysis of single-stranded polyribonucleotides processively in the 3'- to 5'-direction. The sequence is that of Polyribonucleotide nucleotidyltransferase from Campylobacter jejuni subsp. jejuni serotype O:2 (strain ATCC 700819 / NCTC 11168).